Here is a 1733-residue protein sequence, read N- to C-terminus: Protein NETWORKED 1D (1733 aa).

Residues 12–92 (YSWWWDSHIS…ERYDHATGVI (81 aa)) form the NAB domain. Coiled coils occupy residues 195–816 (KEIN…RESS), 897–931 (LIAE…QIDS), 960–1043 (DENS…QKLI), and 1196–1386 (ARSA…NDLM). A disordered region spans residues 1456–1476 (LKTSSARRSRRRNGSLRKQNH). Residues 1460-1470 (SARRSRRRNGS) are compositionally biased toward basic residues. 2 coiled-coil regions span residues 1553–1627 (ANKR…KVQN) and 1653–1686 (SEQA…DRED). The interval 1628–1656 (GFERSDGSKSSMDLDENESSRRRRISEQA) is disordered.

The protein belongs to the NET family.

Functionally, plant-specific actin binding protein. May be part of a membrane-cytoskeletal adapter complex. The sequence is that of Protein NETWORKED 1D from Arabidopsis thaliana (Mouse-ear cress).